The following is a 321-amino-acid chain: Fructose-1,6-bisphosphatase 2 class 2 (321 aa).

The Mn(2+) site is built by aspartate 32, glutamate 56, aspartate 84, and glutamate 87. Substrate is bound by residues 87–89 (EGT), tyrosine 118, 163–165 (KPR), 185–187 (DGD), and glycine 209. Glutamate 212 contributes to the Mn(2+) binding site.

It belongs to the FBPase class 2 family. Homodimer. It depends on Mn(2+) as a cofactor.

It carries out the reaction beta-D-fructose 1,6-bisphosphate + H2O = beta-D-fructose 6-phosphate + phosphate. Its activity is regulated as follows. Competitively inhibited by low concentrations of phosphate (IC50 of 1.2 mM) and is also sensitive to Li(+) (IC50 of 15.8 mM). Also inhibited by 1 mM ATP or 50 mM KCl (60% and 20% residual activity, respectively). Slightly activated (40-50%) by the addition of 1 mM dithiothreitol in vitro. Functionally, catalyzes the hydrolysis of fructose 1,6-bisphosphate to fructose 6-phosphate. Also displays a low activity toward glucose 1,6-bisphosphate, and no activity against ribulose 1,5-bisphosphate, fructose 2,6-bisphosphate, or fructose 1-phosphate. The protein is Fructose-1,6-bisphosphatase 2 class 2 (yggF) of Escherichia coli (strain K12).